A 324-amino-acid polypeptide reads, in one-letter code: Beta-ketoacyl-[acyl-carrier-protein] synthase III (324 aa).

Catalysis depends on residues C114 and H251. The tract at residues 252–256 (QANLR) is ACP-binding. The active site involves N281.

It belongs to the thiolase-like superfamily. FabH family. As to quaternary structure, homodimer.

Its subcellular location is the cytoplasm. It catalyses the reaction malonyl-[ACP] + acetyl-CoA + H(+) = 3-oxobutanoyl-[ACP] + CO2 + CoA. Its pathway is lipid metabolism; fatty acid biosynthesis. Its function is as follows. Catalyzes the condensation reaction of fatty acid synthesis by the addition to an acyl acceptor of two carbons from malonyl-ACP. Catalyzes the first condensation reaction which initiates fatty acid synthesis and may therefore play a role in governing the total rate of fatty acid production. Possesses both acetoacetyl-ACP synthase and acetyl transacylase activities. Its substrate specificity determines the biosynthesis of branched-chain and/or straight-chain of fatty acids. This chain is Beta-ketoacyl-[acyl-carrier-protein] synthase III, found in Dinoroseobacter shibae (strain DSM 16493 / NCIMB 14021 / DFL 12).